Reading from the N-terminus, the 1034-residue chain is Sodium bicarbonate cotransporter 3 (1034 aa).

Disordered regions lie at residues 1–31 (MEAD…KTSS) and 53–99 (HVPF…SQRV). Over 1–476 (MEADGAGEQM…DFKDALSLQC (476 aa)) the chain is Extracellular. 4 positions are modified to phosphoserine: Ser57, Ser60, Ser89, and Ser155. Over residues 60-77 (SRRRHKHRGHKHHHRRRK) the composition is skewed to basic residues. Residues 78–90 (DKDSDKEDGRESP) are compositionally biased toward basic and acidic residues. Asn176 carries N-linked (GlcNAc...) asparagine glycosylation. A phosphoserine mark is found at Ser238, Ser250, Ser260, Met263, Ser268, and Ser271. Residues 250 to 260 (SAPGNLDNSKS) are compositionally biased toward polar residues. A disordered region spans residues 250–276 (SAPGNLDNSKSGEMKGNGSGGSRENST). A glycan (N-linked (GlcNAc...) asparagine) is linked at Asn274. Residues Ser275 and Ser424 each carry the phosphoserine modification. The helical transmembrane segment at 477 to 497 (LASILFLYCACMSPVITFGGL) threads the bilayer. The Cytoplasmic portion of the chain corresponds to 498–505 (LGEATEGR). Residues 506 to 526 (ISAIESLFGASLTGIAYSLFA) traverse the membrane as a helical segment. Residues 527 to 563 (GQPLTILGSTGPVLVFEKILFKFCRDYHLSYLSLRTS) lie on the Extracellular side of the membrane. A helical transmembrane segment spans residues 564 to 584 (IGLWTSFLCIVLVATDASSLV). At 585-593 (CYITRFTEE) the chain is on the cytoplasmic side. A helical transmembrane segment spans residues 594-614 (AFAALICIIFIYEALEKLFHL). The Extracellular segment spans residues 615–685 (GEIYAFNMHN…MFVGSACGPH (71 aa)). A disulfide bridge connects residues Cys634 and Cys636. 3 N-linked (GlcNAc...) asparagine glycosylation sites follow: Asn644, Asn654, and Asn664. The cysteines at positions 670 and 682 are disulfide-linked. Residues 686-706 (GPYVPDVLFWCVVLFFTTFFL) form a helical membrane-spanning segment. Residues 707–729 (SSFLKQFKTKGYFPTKVRSTISD) lie on the Cytoplasmic side of the membrane. A helical transmembrane segment spans residues 730-750 (FAVFLTIVIMVAIDYLVGIPS). Over 751–776 (PKLHVPEKFEPTDPSRGWIISPLGDN) the chain is Extracellular. The helical transmembrane segment at 777–797 (PWWTLLIAAVPALLCTILIFM) threads the bilayer. Topologically, residues 798–812 (DQQITAVIINRKEHK) are cytoplasmic. Residues 813-833 (LKFIPMPVLYGVFLYMGVSSL) traverse the membrane as a helical segment. Positions 815-915 (FIPMPVLYGV…MDLCFTKREL (101 aa)) are essential for cell membrane localization and transport activity. Topologically, residues 834 to 876 (KGIQFFDRIKLFGMPAKHQPDLIYLRYVPLWKVHVFTVVQLTC) are extracellular. Residues 877 to 897 (LVLLWVIKASAAAVVFPMMVL) traverse the membrane as a helical segment. At 898–1034 (ALVFVRKLMD…KKYMDAETSL (137 aa)) the chain is on the cytoplasmic side. The interval 918–920 (LDD) is CA2-binding. The interval 926-946 (KKKKEDDKKKKEKEEAERMLQ) is disordered. Residue Thr951 is modified to Phosphothreonine. A phosphoserine mark is found at Ser960 and Ser1033. The PDZ-binding motif lies at 1031–1034 (ETSL).

Belongs to the anion exchanger (TC 2.A.31) family. Forms a complex with ATP6V1B1 and NHERF1/EBP50. Interacts in a pH dependent-manner with CA2/carbonic anhydrase 2. Interacts with CFTR through NHERF1/EBP50. Interacts with USH1C. Expressed in the spiral ligament throughout the cochlea and in photoreceptors of the outer plexiform layer of the retina (at protein level).

It localises to the basolateral cell membrane. Its subcellular location is the apical cell membrane. The protein localises to the cell projection. It is found in the stereocilium. The protein resides in the cell membrane. It catalyses the reaction hydrogencarbonate(in) + Na(+)(in) = hydrogencarbonate(out) + Na(+)(out). With respect to regulation, activity is inhibited by 4,4'-di-isothiocyanatostilbene-2,2'-disulfonic acid (DIDS - an inhibitor of several anion channels and transporters). In terms of biological role, electroneutral sodium- and bicarbonate-dependent cotransporter with a Na(+):HCO3(-) 1:1 stoichiometry. Mediates the sodium-dependent bicarbonate transport important for pH recovery after acid load as well as for regulation of steady-state pH in the duodenum and vascular smooth muscle cells. Plays a key role in macrophage acidification, mediating bicarbonate import into the cytoplasm which is crucial for net acid extrusion and maintenance of cytoplasmic pH during phagocytosis. Provides cellular bicarbonate for de novo purine and pyrimidine synthesis and is a key mediator of de novo nucleotide synthesis downstream of mTORC1 signaling in proliferating cells. May be involved in maintaining locomotor activity, exploratory behavior, and hearing. The protein is Sodium bicarbonate cotransporter 3 (Slc4a7) of Mus musculus (Mouse).